A 394-amino-acid polypeptide reads, in one-letter code: NAD(P)H-quinone oxidoreductase subunit H (394 aa).

It belongs to the complex I 49 kDa subunit family. As to quaternary structure, NDH-1 can be composed of about 15 different subunits; different subcomplexes with different compositions have been identified which probably have different functions.

The protein localises to the cellular thylakoid membrane. The catalysed reaction is a plastoquinone + NADH + (n+1) H(+)(in) = a plastoquinol + NAD(+) + n H(+)(out). It carries out the reaction a plastoquinone + NADPH + (n+1) H(+)(in) = a plastoquinol + NADP(+) + n H(+)(out). Its function is as follows. NDH-1 shuttles electrons from an unknown electron donor, via FMN and iron-sulfur (Fe-S) centers, to quinones in the respiratory and/or the photosynthetic chain. The immediate electron acceptor for the enzyme in this species is believed to be plastoquinone. Couples the redox reaction to proton translocation, and thus conserves the redox energy in a proton gradient. Cyanobacterial NDH-1 also plays a role in inorganic carbon-concentration. The polypeptide is NAD(P)H-quinone oxidoreductase subunit H (Microcystis aeruginosa (strain NIES-843 / IAM M-2473)).